The chain runs to 688 residues: Elongation factor G (688 aa).

In terms of domain architecture, tr-type G spans 8 to 282 (EKFRNIGIMA…AVVDFMPSPL (275 aa)). GTP-binding positions include 17-24 (AHIDAGKT), 81-85 (DTPGH), and 135-138 (NKMD). The disordered stretch occupies residues 282-305 (LDIPPIKGTDPETGEETDRPADDN).

It belongs to the TRAFAC class translation factor GTPase superfamily. Classic translation factor GTPase family. EF-G/EF-2 subfamily.

It localises to the cytoplasm. Functionally, catalyzes the GTP-dependent ribosomal translocation step during translation elongation. During this step, the ribosome changes from the pre-translocational (PRE) to the post-translocational (POST) state as the newly formed A-site-bound peptidyl-tRNA and P-site-bound deacylated tRNA move to the P and E sites, respectively. Catalyzes the coordinated movement of the two tRNA molecules, the mRNA and conformational changes in the ribosome. In Clostridium kluyveri (strain NBRC 12016), this protein is Elongation factor G.